The sequence spans 360 residues: G-protein coupled receptor 15 (360 aa).

Over 1–33 (MEPATALLIVDYYDYTSPDPPFLETPSHLSYTS) the chain is Extracellular. Residues 34–54 (VFLPIFYTVVFLTGVVGNFIL) form a helical membrane-spanning segment. At 55 to 69 (MIALHFKRGNRRLID) the chain is on the cytoplasmic side. A helical transmembrane segment spans residues 70–90 (IFIINLAASDFIFLVTVPLWM). Residues 91 to 120 (DKEASLGLWRTGSFLCKGSSYVISVNMHCS) lie on the Extracellular side of the membrane. Residues 121–141 (VFLLTCMSMDRYLAIMHPALA) form a helical membrane-spanning segment. At 142-149 (KRLRRRSS) the chain is on the cytoplasmic side. A helical membrane pass occupies residues 150–170 (AYAVCAVVWIISCVLGLPTLL). The Extracellular portion of the chain corresponds to 171-192 (SRELTHIEGKPYCAEKKPTSLK). The chain crosses the membrane as a helical span at residues 193–213 (LMWGLVALITTFFVPLLSIVT). The Cytoplasmic portion of the chain corresponds to 214 to 239 (CYCCITRRLCAHYQQSGKHNKKLKKS). A helical transmembrane segment spans residues 240-260 (IKIVIIAVAAFTVSWVPFNTF). The Extracellular portion of the chain corresponds to 261–284 (KLLAIVSGFQPEGLFHSEALQLAM). The chain crosses the membrane as a helical span at residues 285–305 (NVTGPLAFASSCVNPLIYYVF). At 306-360 (DSYIRRAIVRCLCPCLKTHNFGSSTETSDSHLTKALSNFIHAEDFIRRRKRSVSL) the chain is on the cytoplasmic side. Phosphoserine is present on serine 359.

The protein belongs to the G-protein coupled receptor 1 family. As to quaternary structure, interacts with adapter YWHAE; this interaction promotes ER-to-Golgi transport of GPR15. Phosphorylation is necessary for YWHAE binding and efficient surface expression. Post-translationally, O-glycosylated. Sialylated O-glycans in the N-terminal tail inhibits binding of GPR15LG. In terms of processing, sulfation is required for efficient binding of GPR15LG. In terms of tissue distribution, highly expressed in gut tissues and lymphoid organs, largely restricted to TCRbeta+ cells. Expressed in fetal thymic dendritic epidermal T-cell precursors.

The protein localises to the cell membrane. Functionally, g protein-coupled receptor that plays an important role in immune homeostasis. Acts via its natural ligand GPR15LG, a chemokine-like polypeptide strongly expressed in gastrointestinal tissues. GPR15-GPR15LG signaling axis regulates intestinal homeostasis and inflammation through the migration of immune cells. Controls thereby the specific homing of T-cells, particularly FOXP3+ regulatory T-cells (Tregs), to the large intestine lamina propria. Also required for skin localization of thymus-derived dendritic epidermal T-cells. Plays an important role in mediating cytoprotective function as well as angiogenesis of thrombomodulin. Mechanistically, preferentially signals through the Gi/o pathway to inhibit adenylate cyclase activity and activate a phosphatidylinositol-calcium second messenger system that regulates the release of Ca(2+) ions from intracellular stores. The polypeptide is G-protein coupled receptor 15 (Gpr15) (Mus musculus (Mouse)).